A 356-amino-acid polypeptide reads, in one-letter code: Probable D-xylulose reductase A (356 aa).

Zn(2+) is bound by residues cysteine 45, histidine 70, and glutamate 71. 180–185 is an NAD(+) binding site; sequence GAGPVG.

It belongs to the zinc-containing alcohol dehydrogenase family. Zn(2+) is required as a cofactor.

It catalyses the reaction xylitol + NAD(+) = D-xylulose + NADH + H(+). It functions in the pathway carbohydrate degradation; L-arabinose degradation via L-arabinitol; D-xylulose 5-phosphate from L-arabinose (fungal route): step 4/5. Functionally, xylitol dehydrogenase which catalyzes the conversion of xylitol to D-xylulose. Xylose is a major component of hemicelluloses such as xylan. Most fungi utilize D-xylose via three enzymatic reactions, xylose reductase (XR), xylitol dehydrogenase (XDH), and xylulokinase, to form xylulose 5-phosphate, which enters pentose phosphate pathway. The chain is Probable D-xylulose reductase A (xdhA) from Arthroderma otae (strain ATCC MYA-4605 / CBS 113480) (Microsporum canis).